The chain runs to 903 residues: Protein translocase subunit SecA (903 aa).

ATP contacts are provided by residues Gln87, Gly105–Thr109, and Asp494. The segment at Ser861–Asp883 is disordered. The span at Val872 to Arg881 shows a compositional bias: basic and acidic residues. 4 residues coordinate Zn(2+): Cys885, Cys887, Cys896, and Cys897.

It belongs to the SecA family. Monomer and homodimer. Part of the essential Sec protein translocation apparatus which comprises SecA, SecYEG and auxiliary proteins SecDF. Other proteins may also be involved. Requires Zn(2+) as cofactor.

The protein localises to the cell membrane. It is found in the cytoplasm. The enzyme catalyses ATP + H2O + cellular proteinSide 1 = ADP + phosphate + cellular proteinSide 2.. Functionally, part of the Sec protein translocase complex. Interacts with the SecYEG preprotein conducting channel. Has a central role in coupling the hydrolysis of ATP to the transfer of proteins into and across the cell membrane, serving as an ATP-driven molecular motor driving the stepwise translocation of polypeptide chains across the membrane. The sequence is that of Protein translocase subunit SecA from Symbiobacterium thermophilum (strain DSM 24528 / JCM 14929 / IAM 14863 / T).